The chain runs to 487 residues: L-tartrate/succinate antiporter (487 aa).

Transmembrane regions (helical) follow at residues tyrosine 10–glutamate 30, threonine 33–proline 53, glycine 54–phenylalanine 74, tryptophan 93–glycine 113, threonine 137–serine 157, isoleucine 189–leucine 209, leucine 230–valine 250, leucine 292–valine 312, glycine 313–serine 333, valine 340–isoleucine 360, serine 370–leucine 390, phenylalanine 393–leucine 413, isoleucine 418–threonine 438, and isoleucine 465–valine 485.

It belongs to the SLC13A/DASS transporter (TC 2.A.47) family. DIT1 subfamily.

Its subcellular location is the cell inner membrane. The catalysed reaction is (2R,3R)-tartrate(out) + succinate(in) = (2R,3R)-tartrate(in) + succinate(out). Catalyzes the uptake of tartrate in exchange for intracellular succinate. Essential for anaerobic L-tartrate fermentation. This Shigella dysenteriae serotype 1 (strain Sd197) protein is L-tartrate/succinate antiporter (ttdT).